The chain runs to 546 residues: CTP synthase (546 aa).

The tract at residues M1–L269 is amidoligase domain. Position 16 (S16) interacts with CTP. A UTP-binding site is contributed by S16. Residues S17 to V22 and D74 contribute to the ATP site. The Mg(2+) site is built by D74 and E143. Residues D150–E152, K190–Q195, and K226 each bind CTP. UTP contacts are provided by residues K190–Q195 and K226. One can recognise a Glutamine amidotransferase type-1 domain in the interval T294–N546. Position 356 (G356) interacts with L-glutamine. Catalysis depends on C383, which acts as the Nucleophile; for glutamine hydrolysis. L-glutamine-binding positions include L384–Q387, E407, and R474. Active-site residues include H519 and E521.

It belongs to the CTP synthase family. In terms of assembly, homotetramer.

It catalyses the reaction UTP + L-glutamine + ATP + H2O = CTP + L-glutamate + ADP + phosphate + 2 H(+). The catalysed reaction is L-glutamine + H2O = L-glutamate + NH4(+). The enzyme catalyses UTP + NH4(+) + ATP = CTP + ADP + phosphate + 2 H(+). The protein operates within pyrimidine metabolism; CTP biosynthesis via de novo pathway; CTP from UDP: step 2/2. Its activity is regulated as follows. Allosterically activated by GTP, when glutamine is the substrate; GTP has no effect on the reaction when ammonia is the substrate. The allosteric effector GTP functions by stabilizing the protein conformation that binds the tetrahedral intermediate(s) formed during glutamine hydrolysis. Inhibited by the product CTP, via allosteric rather than competitive inhibition. Its function is as follows. Catalyzes the ATP-dependent amination of UTP to CTP with either L-glutamine or ammonia as the source of nitrogen. Regulates intracellular CTP levels through interactions with the four ribonucleotide triphosphates. The protein is CTP synthase of Francisella tularensis subsp. mediasiatica (strain FSC147).